The primary structure comprises 418 residues: eIF5-mimic protein 2 (418 aa).

The segment covering 1–14 has biased composition (polar residues); sequence MNQKQQKPTLSGQR. Residues 1 to 25 form a disordered region; sequence MNQKQQKPTLSGQRFKTRKRDEKER. In terms of domain architecture, W2 spans 246 to 413; the sequence is NQQTIGARKE…KNAEEESESE (168 aa).

It belongs to the BZW family.

Functionally, translation initiation regulator which may repress repeat-associated non-AUG (RAN) initiated translation probably by acting as a competitive inhibitor of eukaryotic translation initiation factor 5 (EIF5) function. Enhances histone H4 gene transcription but does not seem to bind DNA directly. The protein is eIF5-mimic protein 2 (BZW1) of Gallus gallus (Chicken).